A 346-amino-acid polypeptide reads, in one-letter code: tRNA N6-adenosine threonylcarbamoyltransferase (346 aa).

Residues His-111 and His-115 each contribute to the Fe cation site. Residues 134-138, Asp-167, Gly-180, and Asn-279 each bind substrate; that span reads LVSGG. Residue Asp-307 coordinates Fe cation.

The protein belongs to the KAE1 / TsaD family. It depends on Fe(2+) as a cofactor.

The protein resides in the cytoplasm. The catalysed reaction is L-threonylcarbamoyladenylate + adenosine(37) in tRNA = N(6)-L-threonylcarbamoyladenosine(37) in tRNA + AMP + H(+). Its function is as follows. Required for the formation of a threonylcarbamoyl group on adenosine at position 37 (t(6)A37) in tRNAs that read codons beginning with adenine. Is involved in the transfer of the threonylcarbamoyl moiety of threonylcarbamoyl-AMP (TC-AMP) to the N6 group of A37, together with TsaE and TsaB. TsaD likely plays a direct catalytic role in this reaction. This chain is tRNA N6-adenosine threonylcarbamoyltransferase, found in Burkholderia cenocepacia (strain HI2424).